The primary structure comprises 118 residues: Hisactophilin-2 (118 aa).

The N-myristoyl glycine moiety is linked to residue Gly-2. The interval 8–109 (AHNGHYLSAE…HVSTSHHHDH (102 aa)) is contains several HHXH repeats. A run of 2 repeats spans residues 34–46 (FHIENHGSKVALR) and 74–86 (FHLEHHHGKVSIK). The segment at 34–86 (FHIENHGSKVALRTHCGKYVSIGDHKQVYLSHHLHGDHSLFHLEHHHGKVSIK) is 2 X 13 AA approximate repeats. Positions 99–118 (GHVSTSHHHDHHATFEEHIL) are disordered.

It belongs to the hisactophilin family. Homodimer or heterodimer of hatA and hatB, linked by a disulfide bond. In terms of processing, phosphorylated.

The protein resides in the cytoplasm. Its subcellular location is the cell membrane. In terms of biological role, may act as an intracellular pH sensor that links chemotactic signals to responses in the microfilament system of the cells by nucleating actin polymerization or stabilizing the filaments. In Dictyostelium discoideum (Social amoeba), this protein is Hisactophilin-2 (hatB).